Here is a 477-residue protein sequence, read N- to C-terminus: Tripartite motif-containing protein 72 (477 aa).

Zn(2+) is bound by residues Cys-14, Cys-17, Cys-29, His-31, Cys-34, Cys-37, Cys-53, Cys-56, Cys-86, His-89, Cys-97, Asp-100, Cys-105, Cys-108, His-114, and His-117. The RING-type zinc-finger motif lies at 14-57; it reads CPLCLQLFDAPVTAECGHSFCRACLSRVAGEPAADGTVNCPCCQ. The segment at 81–122 adopts a B box-type zinc-finger fold; sequence VPQGHCEEHLDPLSIYCEQDRVLVCGVCASLGSHRGHRLLPA. Residues 135-232 are a coiled coil; sequence QQKLQLQEAS…EKVLEEVADK (98 aa). A Phosphoserine modification is found at Ser-255. In terms of domain architecture, B30.2/SPRY spans 271–475; that stretch reads DFKFQVWRKM…PLLLVGPDGQ (205 aa).

This sequence belongs to the TRIM/RBCC family. Homodimer. Homooligomer; disulfide-linked. Oligomerizes on the phospholipid membrane. Interacts with DYSF and CAV3. Disulfide bond formation at Cys-242 occurs in case of membrane damage that cause the entry of the oxidized milieu of the extracellular space, resulting in homooligomerization. Muscle-specific.

The protein localises to the cell membrane. The protein resides in the sarcolemma. Its subcellular location is the cytoplasmic vesicle membrane. It catalyses the reaction S-ubiquitinyl-[E2 ubiquitin-conjugating enzyme]-L-cysteine + [acceptor protein]-L-lysine = [E2 ubiquitin-conjugating enzyme]-L-cysteine + N(6)-ubiquitinyl-[acceptor protein]-L-lysine.. The protein operates within protein modification; protein ubiquitination. With respect to regulation, specifically binds phosphatidylserine. The binding to phospholipids enhances ubiquitination activity. Its function is as follows. Muscle-specific E3 ubiquitin-protein ligase that plays a central role in cell membrane repair by nucleating the assembly of the repair machinery at injury sites. Its ubiquitination activity is mediated by E2 ubiquitin-conjugating enzymes UBE2D1, UBE2D2 and UBE2D3. Acts as a sensor of oxidation: upon membrane damage, entry of extracellular oxidative environment results in disulfide bond formation and homooligomerization at the injury site. This oligomerization acts as a nucleation site for recruitment of TRIM72-containing vesicles to the injury site, leading to membrane patch formation. Probably acts upstream of the Ca(2+)-dependent membrane resealing process. Required for transport of DYSF to sites of cell injury during repair patch formation. Regulates membrane budding and exocytosis. May be involved in the regulation of the mobility of KCNB1-containing endocytic vesicles. In Oryctolagus cuniculus (Rabbit), this protein is Tripartite motif-containing protein 72.